A 372-amino-acid polypeptide reads, in one-letter code: Putative RING-H2 finger protein ATL21A (372 aa).

An N-terminal signal peptide occupies residues 1 to 20 (MTFSKQLFLYLFFLFPLLHA). A helical membrane pass occupies residues 242 to 262 (IILLSIIGPLTIFATCIAVGV). Residues 320–362 (CPICLSEYASKETVRCIPECDHCFHSECIDVWLKIHGSCPLCR) form an RING-type; atypical zinc finger.

This sequence belongs to the RING-type zinc finger family. ATL subfamily.

Its subcellular location is the membrane. It catalyses the reaction S-ubiquitinyl-[E2 ubiquitin-conjugating enzyme]-L-cysteine + [acceptor protein]-L-lysine = [E2 ubiquitin-conjugating enzyme]-L-cysteine + N(6)-ubiquitinyl-[acceptor protein]-L-lysine.. It participates in protein modification; protein ubiquitination. This is Putative RING-H2 finger protein ATL21A (ATL21A) from Arabidopsis thaliana (Mouse-ear cress).